Reading from the N-terminus, the 278-residue chain is UPF0758 protein BURPS1106A_0984 (278 aa).

A disordered region spans residues 1–64 (MQYEIVSAGE…ATAAARRGRD (64 aa)). Residues 22-59 (AAAPAAPSSAVPSSAALSSAALSSAAQPTGAPPATAAA) show a composition bias toward low complexity. The 123-residue stretch at 156–278 (LVDSPGAVDD…TFSFAQAGWI (123 aa)) folds into the MPN domain. Residues His227, His229, and Asp240 each contribute to the Zn(2+) site. The JAMM motif signature appears at 227 to 240 (HNHPSGAVRPSAAD).

This sequence belongs to the UPF0758 family.

This Burkholderia pseudomallei (strain 1106a) protein is UPF0758 protein BURPS1106A_0984.